The primary structure comprises 362 residues: DLA class I histocompatibility antigen, A9/A9 alpha chain (362 aa).

The first 24 residues, 1 to 24, serve as a signal peptide directing secretion; the sequence is MEVVMPRALLVLLSAALALTPTRA. An alpha-1 region spans residues 25–114; the sequence is GSHSLRYFYT…LRGYYNQSEA (90 aa). The Extracellular portion of the chain corresponds to 25–306; the sequence is GSHSLRYFYT…RRWEPSPLST (282 aa). N-linked (GlcNAc...) asparagine glycosylation occurs at N110. An alpha-2 region spans residues 115 to 207; sequence GSHTRQTMYG…EMGKETLLRA (93 aa). Intrachain disulfides connect C125–C189 and C228–C284. Positions 208-299 are alpha-3; that stretch reads DPPSTRVTHH…GLPEPITRRW (92 aa). Positions 210–296 constitute an Ig-like C1-type domain; that stretch reads PSTRVTHHPV…QHEGLPEPIT (87 aa). Residues 300–306 are connecting peptide; sequence EPSPLST. A helical transmembrane segment spans residues 307 to 329; it reads IVIVSIAALVLLVVAGVIGAVIW. Over 330–362 the chain is Cytoplasmic; it reads RKQRSGGKGPGYSHAARDDSAQGSDVSLTAPRV. The interval 333–362 is disordered; sequence RSGGKGPGYSHAARDDSAQGSDVSLTAPRV.

Belongs to the MHC class I family. Heterodimer of an alpha chain and a beta chain (beta-2-microglobulin).

The protein resides in the membrane. In terms of biological role, involved in the presentation of foreign antigens to the immune system. In Canis lupus familiaris (Dog), this protein is DLA class I histocompatibility antigen, A9/A9 alpha chain.